A 120-amino-acid chain; its full sequence is Autophagy-related protein 8d (120 aa).

A lipid anchor (Phosphatidylethanolamine amidated glycine) is attached at Gly-117. A propeptide spans 118-120 (IFF) (removed in mature form).

It belongs to the ATG8 family. As to quaternary structure, interacts with ATG4B. Interacts with NBR1. Post-translationally, the C-terminal 3 residues are removed by ATG4 to expose Gly-117 at the C-terminus. This Gly-117 forms then a thioester bond with the 'Cys-558' of ATG7 (E1-like activating enzyme) before being transferred to the 'Cys-258' of ATG3 (the specific E2 conjugating enzyme), in order to be finally amidated with phosphatidylethanolamine. This lipid modification anchors ATG8 to autophagosomes. As to expression, constitutively expressed.

It is found in the cytoplasmic vesicle. It localises to the autophagosome membrane. The protein localises to the vacuole membrane. Its subcellular location is the cytoplasm. The protein resides in the cytoskeleton. Ubiquitin-like modifier involved in autophagosomes formation. May mediate the delivery of the autophagosomes to the vacuole via the microtubule cytoskeleton. The chain is Autophagy-related protein 8d (ATG8D) from Arabidopsis thaliana (Mouse-ear cress).